A 350-amino-acid polypeptide reads, in one-letter code: Fe-S cluster assembly protein dre2 (350 aa).

The tract at residues 23 to 156 (TSFNLRTLLL…KPDHSASVAV (134 aa)) is N-terminal SAM-like domain. The tract at residues 157 to 242 (PLRLRRKDNS…EDTLLTEEDM (86 aa)) is linker. Positions 165–209 (NSKTTAVSNAGPPVSTVEVPVSGKRKSVDMTEDVPEKDVPKNDVP) are disordered. Positions 190–208 (KSVDMTEDVPEKDVPKNDV) are enriched in basic and acidic residues. [2Fe-2S] cluster-binding residues include cysteine 252, cysteine 263, cysteine 266, and cysteine 268. Positions 252 to 268 (CAPRAGKRRRACKDCTC) are fe-S binding site A. 4 residues coordinate [4Fe-4S] cluster: cysteine 313, cysteine 316, cysteine 324, and cysteine 327. Short sequence motifs (cx2C motif) lie at residues 313–316 (CGNC) and 324–327 (CDGC). A fe-S binding site B region spans residues 313 to 327 (CGNCSLGDAFRCDGC).

Belongs to the anamorsin family. As to quaternary structure, monomer. Interacts with TAH18. Interacts with MIA40. [2Fe-2S] cluster is required as a cofactor. It depends on [4Fe-4S] cluster as a cofactor.

It localises to the cytoplasm. Its subcellular location is the mitochondrion intermembrane space. Its function is as follows. Component of the cytosolic iron-sulfur (Fe-S) protein assembly (CIA) machinery required for the maturation of extramitochondrial Fe-S proteins. Part of an electron transfer chain functioning in an early step of cytosolic Fe-S biogenesis, facilitating the de novo assembly of a [4Fe-4S] cluster on the scaffold complex CFD1-NBP35. Electrons are transferred to DRE2 from NADPH via the FAD- and FMN-containing protein TAH18. TAH18-DRE2 are also required for the assembly of the diferric tyrosyl radical cofactor of ribonucleotide reductase (RNR), probably by providing electrons for reduction during radical cofactor maturation in the catalytic small subunit RNR2. This chain is Fe-S cluster assembly protein dre2, found in Sclerotinia sclerotiorum (strain ATCC 18683 / 1980 / Ss-1) (White mold).